Consider the following 484-residue polypeptide: Poly(A) RNA polymerase GLD2 (484 aa).

2 positions are modified to phosphoserine: serine 62 and serine 69. The Nuclear localization signal signature appears at 76–92 (KRISDEKAFPLDGKRQR). A Phosphoserine modification is found at serine 95. Mg(2+)-binding residues include aspartate 213 and aspartate 215. Residues 386 to 440 (SLGDLLLGFLKYYATEFDWNTQMISVREAKAIPRPDDMEWRNKYICVEEPFDGTN) form the PAP-associated domain.

The protein belongs to the DNA polymerase type-B-like family. GLD2 subfamily. As to quaternary structure, interacts with CPEB1, CPEB2, CPSF1 and PABPC1. Interacts with QKI isoform QKI7; promoting recruitment to miRNA miR-122 and miR-122 stabilization. Mg(2+) is required as a cofactor. The cofactor is Mn(2+). Ubiquitous. In brain, it is highly expressed in the cerebral cortex, cerebellum, hippocampus and olfactory bulb.

It is found in the cytoplasm. The protein localises to the nucleus. It catalyses the reaction RNA(n) + ATP = RNA(n)-3'-adenine ribonucleotide + diphosphate. Its function is as follows. Cytoplasmic poly(A) RNA polymerase that adds successive AMP monomers to the 3'-end of specific RNAs, forming a poly(A) tail. In contrast to the canonical nuclear poly(A) RNA polymerase, it only adds poly(A) to selected cytoplasmic mRNAs. Does not play a role in replication-dependent histone mRNA degradation. Adds a single nucleotide to the 3' end of specific miRNAs, monoadenylation stabilizes and prolongs the activity of some but not all miRNAs. This is Poly(A) RNA polymerase GLD2 (Tent2) from Mus musculus (Mouse).